We begin with the raw amino-acid sequence, 273 residues long: Glutamate racemase (273 aa).

Substrate contacts are provided by residues 11 to 12 (DS) and 43 to 44 (YG). The Proton donor/acceptor role is filled by Cys-74. 75 to 76 (NT) is a substrate binding site. The Proton donor/acceptor role is filled by Cys-185. 186 to 187 (TH) is a binding site for substrate.

Belongs to the aspartate/glutamate racemases family.

It catalyses the reaction L-glutamate = D-glutamate. Its pathway is cell wall biogenesis; peptidoglycan biosynthesis. In terms of biological role, provides the (R)-glutamate required for cell wall biosynthesis. The polypeptide is Glutamate racemase (Lactiplantibacillus plantarum (strain ATCC BAA-793 / NCIMB 8826 / WCFS1) (Lactobacillus plantarum)).